The sequence spans 48 residues: ARRRHSMKKKRKSVRRRKTRKNQRKRKNSLGRSFKQHGFLKQPPRFRP.

Residues 1–29 (ARRRHSMKKKRKSVRRRKTRKNQRKRKNS) show a composition bias toward basic residues. The segment at 1–48 (ARRRHSMKKKRKSVRRRKTRKNQRKRKNSLGRSFKQHGFLKQPPRFRP) is disordered.

As to expression, testis.

It localises to the nucleus. The protein resides in the chromosome. Protamines substitute for histones in the chromatin of sperm during the haploid phase of spermatogenesis. They compact sperm DNA into a highly condensed, stable and inactive complex. The protein is Sperm protamine R3 isoform 1 of Hydrolagus colliei (Spotted ratfish).